A 265-amino-acid polypeptide reads, in one-letter code: MQPDLHCRTLAAHTLKHFRALSPLTHCMTNDVVQTFTANTLLALGASPAMVIDPVEARPFAAIANALLVNVGTLTASRADAMRAAVESAYDAKTPWTLDPVAVGALEFRRRFCLDLLSLRPAAIRGNASEILALSGMALGGRGVDTTEAALAALPAAQALAHQIDCIVVVTREIDYVTNGQRTLSIPGGDPLMTRIVGTGCALSAVVAASCALPGAALDNVASACCWMKLAGQAAAERSEGPGSFIPAFLDALYHLDVEAANEEN.

M50 contacts substrate. Residues R125 and T171 each contribute to the ATP site. G198 contacts substrate.

It belongs to the Thz kinase family. It depends on Mg(2+) as a cofactor.

It catalyses the reaction 5-(2-hydroxyethyl)-4-methylthiazole + ATP = 4-methyl-5-(2-phosphooxyethyl)-thiazole + ADP + H(+). It participates in cofactor biosynthesis; thiamine diphosphate biosynthesis; 4-methyl-5-(2-phosphoethyl)-thiazole from 5-(2-hydroxyethyl)-4-methylthiazole: step 1/1. In terms of biological role, catalyzes the phosphorylation of the hydroxyl group of 4-methyl-5-beta-hydroxyethylthiazole (THZ). This Salmonella paratyphi C (strain RKS4594) protein is Hydroxyethylthiazole kinase.